The following is a 215-amino-acid chain: Ribosomal RNA small subunit methyltransferase G (215 aa).

S-adenosyl-L-methionine is bound by residues Gly-77, Phe-82, 130 to 131 (IE), and Arg-146.

It belongs to the methyltransferase superfamily. RNA methyltransferase RsmG family.

The protein resides in the cytoplasm. The enzyme catalyses guanosine(527) in 16S rRNA + S-adenosyl-L-methionine = N(7)-methylguanosine(527) in 16S rRNA + S-adenosyl-L-homocysteine. Its function is as follows. Specifically methylates the N7 position of guanine in position 527 of 16S rRNA. The sequence is that of Ribosomal RNA small subunit methyltransferase G from Bartonella bacilliformis (strain ATCC 35685 / KC583 / Herrer 020/F12,63).